Here is a 120-residue protein sequence, read N- to C-terminus: uncharacterized protein (120 aa).

Positions 4–120 constitute a VOC domain; it reads QIGTVAVYVE…EDGNVFLLKE (117 aa).

This is an uncharacterized protein from Bacillus subtilis (strain 168).